The following is a 52-amino-acid chain: MQLNLGAIFLALLGVMATATSVLAEPHRHQGPIFDTRPSPFNPNQPRPGPIY.

Residues 1 to 24 (MQLNLGAIFLALLGVMATATSVLA) form the signal peptide. Residues 25-26 (EP) constitute a propeptide that is removed on maturation. Positions 28–52 (RHQGPIFDTRPSPFNPNQPRPGPIY) are disordered. Positions 40-52 (PFNPNQPRPGPIY) are enriched in pro residues.

In terms of tissue distribution, hemolymph (at protein level). Highest expression in fat body.

It localises to the secreted. Functionally, potent antifungal and antibacterial activity against Gram-positive bacteria. This chain is Metchnikowin (Mtk), found in Drosophila melanogaster (Fruit fly).